The sequence spans 344 residues: Heat-inducible transcription repressor HrcA (344 aa).

This sequence belongs to the HrcA family.

Its function is as follows. Negative regulator of class I heat shock genes (grpE-dnaK-dnaJ and groELS operons). Prevents heat-shock induction of these operons. This chain is Heat-inducible transcription repressor HrcA, found in Streptococcus pneumoniae serotype 19F (strain G54).